The chain runs to 477 residues: Homeobox protein Meis2 (477 aa).

Residues 71 to 191 (DALKRDKDAI…KMPIDLVIDE (121 aa)) are required for interaction with PBX1. The region spanning 110–193 (GGDVCSSDSF…PIDLVIDERD (84 aa)) is the MEIS N-terminal domain. Positions 193-203 (DGSSKSDHEEL) are enriched in basic and acidic residues. Residues 193–283 (DGSSKSDHEE…KKRQKKRGIF (91 aa)) form a disordered region. Composition is skewed to polar residues over residues 204-217 (SGSSTNLADHNPSS) and 239-251 (GHASQSGDNSSEQ). Residues 276–338 (RQKKRGIFPK…NARRRIVQPM (63 aa)) constitute a DNA-binding region (homeobox; TALE-type). The interaction with DNA stretch occupies residues 299-333 (LTHPYPSEEQKKQLAQDTGLTILQVNNWFINARRR). Residues 340–477 (DQSNRAGFLL…GGQVMDIHAQ (138 aa)) are transcriptional activation domain.

This sequence belongs to the TALE/MEIS homeobox family. In terms of assembly, monomer and homodimer. Heterodimer with HOXB13. Isoform Meis2A interacts with TLX1. Isoform Meis2B interacts with HOXA13 and PBX1 isoform PBX1b. Isoform Meis2D interacts with SP1, SP3 and KLF4. Isoform Meis2D interacts with PBX1 isoform PBX1a; the interaction partially relieves MEIS2 autoinhibition. Isoform Meis2B is part of a PDX1:PBX1b:MEIS2b complex; Meis2B is recruited by PBX1b and can be replaced by isoform Meis2D in a small fraction of complexes. Can form trimeric complexes including HOXB8 and PBX2 or PBX3. In terms of tissue distribution, displays spatially restricted expression patterns in the developing nervous system, limbs, face, and in various viscera. In adult, it is mainly expressed in the brain and female genital tract, with a different distribution of the alternative splice forms in these organs. Lower expression in lung and only basal level in heart, liver, kidney, spleen, and testis. Expressed in pancreatic islets (beta-cells only).

The protein localises to the nucleus. It is found in the cytoplasm. It localises to the perinuclear region. Its function is as follows. Involved in transcriptional regulation. Binds to HOX or PBX proteins to form dimers, or to a DNA-bound dimer of PBX and HOX proteins and thought to have a role in stabilization of the homeoprotein-DNA complex. Isoform Meis2B is required for the activity of a PDX1:PBX1b:MEIS2b complex in pancreatic acinar cells involved in the transcriptional activation of the ELA1 enhancer; the complex binds to the enhancer B element and cooperates with the transcription factor 1 complex (PTF1) bound to the enhancer A element; MEIS2 is not involved in complex DNA-binding. Probably in complex with PBX1, is involved in transcriptional regulation by KLF4. Isoforms Meis2B and Meis2D can bind to a EPHA8 promoter sequence containing the DNA motif 5'-CGGTCA-3'; in cooperation with a PBX protein (such as PBX2) is proposed to be involved in the transcriptional activation of EPHA8 in the developing midbrain. May be involved in regulation of myeloid differentiation. Can bind to the DNA sequence 5'-TGACAG-3'in the activator ACT sequence of the D(1A) dopamine receptor (DRD1) promoter and activate DRD1 transcription. This Mus musculus (Mouse) protein is Homeobox protein Meis2 (Meis2).